We begin with the raw amino-acid sequence, 250 residues long: Eukaryotic translation initiation factor 3 subunit K (250 aa).

In terms of domain architecture, PCI spans 54 to 235 (YDLFGNLAIL…DVKAGVVKEN (182 aa)).

Belongs to the eIF-3 subunit K family. Component of the eukaryotic translation initiation factor 3 (eIF-3) complex.

It is found in the cytoplasm. Its function is as follows. Component of the eukaryotic translation initiation factor 3 (eIF-3) complex, which is involved in protein synthesis of a specialized repertoire of mRNAs and, together with other initiation factors, stimulates binding of mRNA and methionyl-tRNAi to the 40S ribosome. The eIF-3 complex specifically targets and initiates translation of a subset of mRNAs involved in cell proliferation. In Cryptococcus neoformans var. neoformans serotype D (strain B-3501A) (Filobasidiella neoformans), this protein is Eukaryotic translation initiation factor 3 subunit K.